The sequence spans 203 residues: Urease accessory protein UreG (203 aa).

14 to 21 contributes to the GTP binding site; sequence GPVGSGKT.

It belongs to the SIMIBI class G3E GTPase family. UreG subfamily. As to quaternary structure, homodimer. UreD, UreF and UreG form a complex that acts as a GTP-hydrolysis-dependent molecular chaperone, activating the urease apoprotein by helping to assemble the nickel containing metallocenter of UreC. The UreE protein probably delivers the nickel.

The protein resides in the cytoplasm. In terms of biological role, facilitates the functional incorporation of the urease nickel metallocenter. This process requires GTP hydrolysis, probably effectuated by UreG. This Rhizobium etli (strain ATCC 51251 / DSM 11541 / JCM 21823 / NBRC 15573 / CFN 42) protein is Urease accessory protein UreG.